We begin with the raw amino-acid sequence, 493 residues long: MTDLTSLTIAEAREKLKAKDFSALELTDAYLSAIDAANGALNAYVALTPEKARDMAKASDERIASGSAGELEGVPLGVKDLFATRDVHTQACSHVLDGFKPKYESTVTQNLWDQGAVMLGKLNMDEFAMGSSNESSWYGPVINPWRANGSEQKLVPGGSSGGSAAAVAAHLCAGATATDTGGSIRQPAAFTGTVGIKPTYGRCSRFGIVAYASSLDQAGPIARDVRDAAILLKTMASVDAKDTTSVDLPVPDYEKAIGQSLKGLKIGIPREYRVDGMPEEIEKLWAKGVEWLRDAGAEVVDISLPHTKYALPAYYIVAPAEASSNLARYDGVRYGLRVDGKDIADMYEKSRAAGFGKEVQRRIMVGTYVLSAGYYDAYYLKAQKVRTLIKRDFENVFHEGVDAILAPITPSSAFAVGDEELASDPVKMYLQDVFTITVNMAGLPGLSVPAGLDGKGLPLGLQLIGKPFEEETLFKTAHAIEQAAGKFTPAKWW.

Active-site charge relay system residues include K79 and S159. The active-site Acyl-ester intermediate is the S183.

It belongs to the amidase family. GatA subfamily. In terms of assembly, heterotrimer of A, B and C subunits.

The catalysed reaction is L-glutamyl-tRNA(Gln) + L-glutamine + ATP + H2O = L-glutaminyl-tRNA(Gln) + L-glutamate + ADP + phosphate + H(+). Allows the formation of correctly charged Gln-tRNA(Gln) through the transamidation of misacylated Glu-tRNA(Gln) in organisms which lack glutaminyl-tRNA synthetase. The reaction takes place in the presence of glutamine and ATP through an activated gamma-phospho-Glu-tRNA(Gln). In Agrobacterium fabrum (strain C58 / ATCC 33970) (Agrobacterium tumefaciens (strain C58)), this protein is Glutamyl-tRNA(Gln) amidotransferase subunit A.